A 132-amino-acid polypeptide reads, in one-letter code: UPF0299 membrane protein YohJ (132 aa).

4 helical membrane-spanning segments follow: residues 7–27, 31–51, 63–83, and 93–113; these read IIWQ…AGIF, LLPI…VLLA, GCYV…VGVM, and FGPV…VVSW.

It belongs to the UPF0299 family.

The protein localises to the cell inner membrane. This Salmonella arizonae (strain ATCC BAA-731 / CDC346-86 / RSK2980) protein is UPF0299 membrane protein YohJ.